Reading from the N-terminus, the 342-residue chain is Biotin synthase (342 aa).

The Radical SAM core domain occupies asparagine 55–lysine 274. Positions 70, 74, and 77 each coordinate [4Fe-4S] cluster. [2Fe-2S] cluster-binding residues include cysteine 114, cysteine 145, cysteine 205, and arginine 278.

The protein belongs to the radical SAM superfamily. Biotin synthase family. Homodimer. It depends on [4Fe-4S] cluster as a cofactor. Requires [2Fe-2S] cluster as cofactor.

The enzyme catalyses (4R,5S)-dethiobiotin + (sulfur carrier)-SH + 2 reduced [2Fe-2S]-[ferredoxin] + 2 S-adenosyl-L-methionine = (sulfur carrier)-H + biotin + 2 5'-deoxyadenosine + 2 L-methionine + 2 oxidized [2Fe-2S]-[ferredoxin]. It participates in cofactor biosynthesis; biotin biosynthesis; biotin from 7,8-diaminononanoate: step 2/2. Catalyzes the conversion of dethiobiotin (DTB) to biotin by the insertion of a sulfur atom into dethiobiotin via a radical-based mechanism. This chain is Biotin synthase, found in Rhodopseudomonas palustris (strain BisB5).